The following is a 354-amino-acid chain: Rhodopsin (354 aa).

Topologically, residues 1–36 (MNGTEGENFYIPMSNKTGVVRSPFDYPQYYLAEPWK) are extracellular. N-linked (GlcNAc...) asparagine glycans are attached at residues asparagine 2 and asparagine 15. A helical transmembrane segment spans residues 37–61 (FSVLAAYMFFLIIAGFPVNFLTLYV). Residues 62–73 (TIQHKKLRQPLN) are Cytoplasmic-facing. The helical transmembrane segment at 74 to 96 (YILLNLAVADLFMIFGGFPSTMI) threads the bilayer. Over 97-110 (TSMNGYFVFGPSGC) the chain is Extracellular. Cysteines 110 and 187 form a disulfide. The chain crosses the membrane as a helical span at residues 111 to 133 (NFEGFFATLGGEIGLWSLVVLAI). Positions 134–136 (ERY) match the 'Ionic lock' involved in activated form stabilization motif. Over 134-152 (ERYVVVCKPMSNFRFGSQH) the chain is Cytoplasmic. The helical transmembrane segment at 153–173 (AFMGVGLTWIMAMACAFPPLV) threads the bilayer. Topologically, residues 174–202 (GWSRYIPEGMQCSCGIDYYTLKPEVNNES) are extracellular. Asparagine 200 is a glycosylation site (N-linked (GlcNAc...) asparagine). The helical transmembrane segment at 203-224 (FVIYMFVVHFSIPLTIIFFCYG) threads the bilayer. The Cytoplasmic portion of the chain corresponds to 225 to 252 (RLVCTVKEAAAQQQESETTQRAEREVTR). Residues 253–274 (MVIIMVIAFLICWLPYASVAFF) form a helical membrane-spanning segment. Residues 275–286 (IFCNQGSEFGPI) lie on the Extracellular side of the membrane. Residues 287–308 (FMTIPAFFAKAASLYNPLIYIL) traverse the membrane as a helical segment. Lysine 296 carries the post-translational modification N6-(retinylidene)lysine. The Cytoplasmic segment spans residues 309–354 (MNKQFRNCMITTICCGKNPFEEEESTSASASKTEASSVSSSQVAPA). S-palmitoyl cysteine attachment occurs at residues cysteine 322 and cysteine 323. Residues 333–354 (STSASASKTEASSVSSSQVAPA) are disordered. Over residues 334–354 (TSASASKTEASSVSSSQVAPA) the composition is skewed to low complexity.

This sequence belongs to the G-protein coupled receptor 1 family. Opsin subfamily. Post-translationally, phosphorylated on some or all of the serine and threonine residues present in the C-terminal region. Contains one covalently linked retinal chromophore.

The protein localises to the membrane. It is found in the cell projection. Its subcellular location is the cilium. It localises to the photoreceptor outer segment. In terms of biological role, photoreceptor required for image-forming vision at low light intensity. While most salt water fish species use retinal as chromophore, most freshwater fish use 3-dehydroretinal, or a mixture of retinal and 3-dehydroretinal. Light-induced isomerization of 11-cis to all-trans retinal triggers a conformational change that activates signaling via G-proteins. Subsequent receptor phosphorylation mediates displacement of the bound G-protein alpha subunit by arrestin and terminates signaling. In Scyliorhinus canicula (Small-spotted catshark), this protein is Rhodopsin (rho).